The sequence spans 585 residues: Staphyloferrin A synthase (585 aa).

The protein belongs to the IucA/IucC family.

It carries out the reaction N(5)-[(S)-citryl]-D-ornithine + citrate + ATP = staphyloferrin A + AMP + diphosphate + H(+). The protein operates within siderophore biosynthesis. Involved in the biosynthesis of the siderophore staphyloferrin A. Catalyzes the ATP-dependent condensation of a citryl-D-ornithine intermediate, produced by SfnaD, and citrate to form staphyloferrin A. This Staphylococcus aureus (strain NCTC 8325 / PS 47) protein is Staphyloferrin A synthase.